Here is a 499-residue protein sequence, read N- to C-terminus: MTTFYLSLIISLFFLIITLKVFFNTSRKFKNLPPGPQCLPIIGNLHQLKQPLHHTFHTLSQKYGQIFSLWFGSRLVVVVSSLTIAQECFTKNDIVLANRPHFLTGKYIGYNNTTVAQSPYGDHWRNLRRILSIEILSSHRLNSFLEIRRDEIMRLIQKLAQKSYNGFTEVELRPMFSEMTFNTIMRMVSGKRYYGNDCDVSDVEEARLFRGIIKEVVSLGGANNVGDFLGFLRWFDFDGLEKRLKKISKRTDAFLQGLIDEHRFGKRNSNTMIDHLLTQQQSQPEYYTDQIIKGLMVVMLLAGTDTSSVTIEWAMSNLLNHPEIMKKAKNELDTHIGHDRQVDEHDISKLPYLQSIVYETLRLHAAAPLLVPHLSSEDFSLGGYNIPQNTILMVNAWVIHRDPNLWSDPTCFKPERFEKEGEVNKLLSFGLGRRACPGENLSQRTEGLTLGLLIQCFEWKRIGEEKIDMVEAKGITAGKKTSLNAMCKVRHPLKINDVF.

A helical transmembrane segment spans residues 3 to 23; it reads TFYLSLIISLFFLIITLKVFF. C436 contributes to the heme binding site.

This sequence belongs to the cytochrome P450 family. Heme serves as cofactor.

Its subcellular location is the membrane. In terms of biological role, probable monooxygenases exhibiting no activity with isoflavones such as formononetin, biochanin A, pseudobaptigenin, daidzein, genistein, isoformononetin and prunetin, or with flavonoids including naringenin, liquiritigenin, apigenin, luteolin, or kaempferol. The sequence is that of Cytochrome P450 81E8 from Medicago truncatula (Barrel medic).